The sequence spans 309 residues: Protein phosphatase 1 regulatory subunit 42 (309 aa).

LRR repeat units lie at residues 29–50 (KITH…SLCK), 51–72 (NLSV…NYAT), 73–94 (NLTH…RSLK), 95–116 (KLEK…EGLG), 117–138 (ELRE…LFDP), 147–168 (SLCI…ELLE), and 169–190 (NLNQ…EFLL). The LRRCT domain maps to 204–242 (NPVCLKPKYRDRLILVSKSLEFLDGKEIKNIERQFLMNW).

In terms of assembly, interacts with PPP1CC isoform gamma-2; the interaction is direct. Interacts with actin, dynein, KIF5B, KIFC1 and tubulin. Associates with microtubules. Post-translationally, phosphorylated; in the testis.

Its subcellular location is the cytoplasm. It is found in the cytoskeleton. The protein resides in the microtubule organizing center. It localises to the centrosome. Its function is as follows. Regulates phosphatase activity of protein phosphatase 1 (PP1) complexes in the testis. In Homo sapiens (Human), this protein is Protein phosphatase 1 regulatory subunit 42.